A 416-amino-acid polypeptide reads, in one-letter code: Lipase A (416 aa).

The signal sequence occupies residues M1–A32. 2 disulfide bridges follow: C67–C391 and C177–C180. N-linked (GlcNAc...) asparagine glycosylation occurs at N179. The active-site Nucleophile is the S219. Residues D287 and H381 each act as charge relay system in the active site.

It belongs to the AB hydrolase superfamily. Lipase family. Post-translationally, glycosylated.

The protein resides in the secreted. It carries out the reaction Deacetylation of xylans and xylo-oligosaccharides.. The enzyme catalyses a triacylglycerol + H2O = a diacylglycerol + a fatty acid + H(+). Lipolytic enzyme that possesses both lipase and acetylxylan esterase activity. Active towards p-nitrophenol esters of various carbon chain length with preference for medium-chain fatty acids (C-8). Also highly active on the acetylated compounds xylose tetra-acetate and oat spelt xylan. This Sodiomyces alcalophilus (Acremonium alcalophilum) protein is Lipase A.